Here is a 211-residue protein sequence, read N- to C-terminus: Arginine exporter protein ArgO (211 aa).

6 helical membrane-spanning segments follow: residues 1–21, 37–57, 68–88, 111–131, 147–167, and 179–199; these read MISYYFQGFALGVAMILPLGP, LMIALLCALSDLVLISAGIFG, LLALVTWGGVAFLLWYGFGAL, IIATMLAVTWLNPHVYLDTFV, WFALGTISASFLWFFGLALLA, and AQRIINILVGVVMWLIAFQLA.

The protein belongs to the LysE/ArgO transporter (TC 2.A.75) family.

It localises to the cell inner membrane. The catalysed reaction is L-arginine(in) = L-arginine(out). In terms of biological role, involved in the export of arginine. Important to control the intracellular level of arginine and the correct balance between arginine and lysine. This chain is Arginine exporter protein ArgO, found in Salmonella paratyphi A (strain ATCC 9150 / SARB42).